The sequence spans 405 residues: NADH-quinone oxidoreductase subunit D (405 aa).

This sequence belongs to the complex I 49 kDa subunit family. As to quaternary structure, NDH-1 is composed of 14 different subunits. Subunits NuoB, C, D, E, F, and G constitute the peripheral sector of the complex.

The protein resides in the cell inner membrane. It catalyses the reaction a quinone + NADH + 5 H(+)(in) = a quinol + NAD(+) + 4 H(+)(out). NDH-1 shuttles electrons from NADH, via FMN and iron-sulfur (Fe-S) centers, to quinones in the respiratory chain. The immediate electron acceptor for the enzyme in this species is believed to be ubiquinone. Couples the redox reaction to proton translocation (for every two electrons transferred, four hydrogen ions are translocated across the cytoplasmic membrane), and thus conserves the redox energy in a proton gradient. This chain is NADH-quinone oxidoreductase subunit D, found in Ruegeria pomeroyi (strain ATCC 700808 / DSM 15171 / DSS-3) (Silicibacter pomeroyi).